A 364-amino-acid polypeptide reads, in one-letter code: Chorismate synthase (364 aa).

Arginine 48 is a binding site for NADP(+). FMN-binding positions include arginine 131–serine 133, asparagine 243–alanine 244, glycine 288, lysine 303–serine 307, and arginine 329.

Belongs to the chorismate synthase family. In terms of assembly, homotetramer. It depends on FMNH2 as a cofactor.

It carries out the reaction 5-O-(1-carboxyvinyl)-3-phosphoshikimate = chorismate + phosphate. Its pathway is metabolic intermediate biosynthesis; chorismate biosynthesis; chorismate from D-erythrose 4-phosphate and phosphoenolpyruvate: step 7/7. Its function is as follows. Catalyzes the anti-1,4-elimination of the C-3 phosphate and the C-6 proR hydrogen from 5-enolpyruvylshikimate-3-phosphate (EPSP) to yield chorismate, which is the branch point compound that serves as the starting substrate for the three terminal pathways of aromatic amino acid biosynthesis. This reaction introduces a second double bond into the aromatic ring system. The protein is Chorismate synthase of Bartonella bacilliformis (strain ATCC 35685 / KC583 / Herrer 020/F12,63).